Consider the following 56-residue polypeptide: Small ribosomal subunit protein uS14 (56 aa).

Zn(2+) contacts are provided by Cys-21, Cys-24, Cys-39, and Cys-42.

The protein belongs to the universal ribosomal protein uS14 family. The cofactor is Zn(2+).

This is Small ribosomal subunit protein uS14 (RPS29) from Griffithsia japonica (Red alga).